Reading from the N-terminus, the 542-residue chain is Chaperonin GroEL (542 aa).

ATP is bound by residues 29–32 (TLGP), 86–90 (DGTTT), glycine 413, 476–478 (NAA), and aspartate 492. Residues 521 to 542 (QPDENGPAAGPDMGMGGMGGMM) form a disordered region. Gly residues predominate over residues 533–542 (MGMGGMGGMM).

This sequence belongs to the chaperonin (HSP60) family. In terms of assembly, forms a cylinder of 14 subunits composed of two heptameric rings stacked back-to-back. Interacts with the co-chaperonin GroES.

It localises to the cytoplasm. The catalysed reaction is ATP + H2O + a folded polypeptide = ADP + phosphate + an unfolded polypeptide.. Functionally, together with its co-chaperonin GroES, plays an essential role in assisting protein folding. The GroEL-GroES system forms a nano-cage that allows encapsulation of the non-native substrate proteins and provides a physical environment optimized to promote and accelerate protein folding. In Listeria innocua serovar 6a (strain ATCC BAA-680 / CLIP 11262), this protein is Chaperonin GroEL.